The following is a 603-amino-acid chain: Shugoshin (603 aa).

Residues 11 to 74 (HIQELQNILD…NVQLRSQVSL (64 aa)) adopt a coiled-coil conformation. 2 disordered regions span residues 112 to 164 (ESLP…RSST) and 201 to 227 (NEID…SNRR). 2 stretches are compositionally biased toward low complexity: residues 146–157 (SVSTGSAHSTSS) and 201–214 (NEID…DNLL). The span at 218 to 227 (PHKKRKSNRR) shows a compositional bias: basic residues. Positions 304-325 (KQDILDETEKRDTAVNQKKKLE) form a coiled coil. Residues 331–399 (PVEELSSSKN…ESVDFDRPRR (69 aa)) form a disordered region. Basic residues predominate over residues 362–376 (KVKHSMKSRKPKKNK). Residues 431 to 451 (NIQDLQVKYKKSKKVLEKELK) adopt a coiled-coil conformation. The span at 455–467 (KAMKSPKKNEKTF) shows a compositional bias: basic and acidic residues. Disordered stretches follow at residues 455 to 519 (KAMK…HSSF) and 583 to 603 (HNDT…KNKA). Positions 483–512 (RPSSTHSTSSVDAECSHNNSHSENINSSIN) are enriched in low complexity. Residues 583-593 (HNDTNKSSPKT) are compositionally biased toward polar residues. The span at 594-603 (YRSRSRKNKA) shows a compositional bias: basic residues.

This sequence belongs to the shugoshin family.

The protein localises to the nucleus. The protein resides in the chromosome. It is found in the centromere. Its function is as follows. Plays a central role in chromosome cohesion during cell division by preventing premature dissociation of cohesin complex from centromeres after prophase, when most of cohesin complex dissociates from chromosomes arms. This chain is Shugoshin (SGO1), found in Candida glabrata (strain ATCC 2001 / BCRC 20586 / JCM 3761 / NBRC 0622 / NRRL Y-65 / CBS 138) (Yeast).